A 341-amino-acid polypeptide reads, in one-letter code: MKSVTLKELSLLLDGVVQGDETLVINSVATLEHATSGQISFLANSKYRAQLESTQASAVLLSAKDAQDYQGTALVVKDPYVGFARVAQLLDTTPKAAMGIHPSAQIDPSAQLGDGVAIGANAVIGANVILGENVQIGAGTVIGQDSIIGSNTRLWANVTLYHNVHLGQDCIIHSGAIIGSDGFGYANERGQWIKIPQTGGVRIGDRVEIGANSTIDRGALGHTEIHNGVIIDNQVQVAHNDIIGENTAIAGSTTIAGSVTIGKHCIIGGNCAIAGHLTIADGVHLSGATNVTGNMREPGLYSSATVAMDNNLWRKNTVRFRQLDELFQRVKAIEKNLNTPE.

Catalysis depends on His-239, which acts as the Proton acceptor.

The protein belongs to the transferase hexapeptide repeat family. LpxD subfamily. Homotrimer.

The catalysed reaction is a UDP-3-O-[(3R)-3-hydroxyacyl]-alpha-D-glucosamine + a (3R)-hydroxyacyl-[ACP] = a UDP-2-N,3-O-bis[(3R)-3-hydroxyacyl]-alpha-D-glucosamine + holo-[ACP] + H(+). It functions in the pathway bacterial outer membrane biogenesis; LPS lipid A biosynthesis. Functionally, catalyzes the N-acylation of UDP-3-O-acylglucosamine using 3-hydroxyacyl-ACP as the acyl donor. Is involved in the biosynthesis of lipid A, a phosphorylated glycolipid that anchors the lipopolysaccharide to the outer membrane of the cell. This is UDP-3-O-acylglucosamine N-acyltransferase from Shewanella oneidensis (strain ATCC 700550 / JCM 31522 / CIP 106686 / LMG 19005 / NCIMB 14063 / MR-1).